Here is a 390-residue protein sequence, read N- to C-terminus: Ribonuclease D (390 aa).

Positions 7–173 (ITDSATLAAL…TLFPMLLKEL (167 aa)) constitute a 3'-5' exonuclease domain. One can recognise an HRDC domain in the interval 212–293 (KADILGRLKA…ENAEALRPEE (82 aa)).

The protein belongs to the RNase D family. A divalent metal cation is required as a cofactor.

Its subcellular location is the cytoplasm. It catalyses the reaction Exonucleolytic cleavage that removes extra residues from the 3'-terminus of tRNA to produce 5'-mononucleotides.. Functionally, exonuclease involved in the 3' processing of various precursor tRNAs. Initiates hydrolysis at the 3'-terminus of an RNA molecule and releases 5'-mononucleotides. In Zymomonas mobilis subsp. mobilis (strain ATCC 31821 / ZM4 / CP4), this protein is Ribonuclease D.